A 213-amino-acid chain; its full sequence is Immunoglobulin lambda-like polypeptide 1 (213 aa).

The first 37 residues, 1-37 (MRPGTGQGGLEAPGEPGPNLRQRWPLLLLGLAVVTHG), serve as a signal peptide directing secretion. Residues 97–108 (VFGSGTQLTVLS) form a j region region. Residues 109 to 213 (QPKATPSVTL…EKTVAPAECS (105 aa)) are c region. An Ig-like C1-type domain is found at 114 to 208 (PSVTLFPPSS…EGSTVEKTVA (95 aa)). Cysteine 135 and cysteine 194 are joined by a disulfide.

Associates non-covalently with VPREB1. Interacts with SYNV1/HRD1 (via N-terminus); this interaction leads to increased IGLL1 ubiquitination and degradation in pre-B cells, possibly through a lysosomal, not proteasomal, pathway. As to expression, expressed only in pre-B-cells and a special B-cell line (which is surface Ig negative).

The protein localises to the endoplasmic reticulum. The protein resides in the secreted. In terms of biological role, critical for B-cell development. In Homo sapiens (Human), this protein is Immunoglobulin lambda-like polypeptide 1 (IGLL1).